Here is a 223-residue protein sequence, read N- to C-terminus: 7-cyano-7-deazaguanine synthase (223 aa).

15–25 (FSGGQDSTTCL) provides a ligand contact to ATP. Cysteine 191, cysteine 200, cysteine 203, and cysteine 206 together coordinate Zn(2+).

The protein belongs to the QueC family. In terms of assembly, homodimer. Requires Zn(2+) as cofactor.

The enzyme catalyses 7-carboxy-7-deazaguanine + NH4(+) + ATP = 7-cyano-7-deazaguanine + ADP + phosphate + H2O + H(+). It functions in the pathway purine metabolism; 7-cyano-7-deazaguanine biosynthesis. Its function is as follows. Catalyzes the ATP-dependent conversion of 7-carboxy-7-deazaguanine (CDG) to 7-cyano-7-deazaguanine (preQ(0)). The chain is 7-cyano-7-deazaguanine synthase from Staphylococcus epidermidis (strain ATCC 35984 / DSM 28319 / BCRC 17069 / CCUG 31568 / BM 3577 / RP62A).